We begin with the raw amino-acid sequence, 149 residues long: Hut operon positive regulatory protein (149 aa).

The protein belongs to the HutP family. Homohexamer.

Antiterminator that binds to cis-acting regulatory sequences on the mRNA in the presence of histidine, thereby suppressing transcription termination and activating the hut operon for histidine utilization. The sequence is that of Hut operon positive regulatory protein from Geobacillus thermodenitrificans (strain NG80-2).